The following is a 256-amino-acid chain: Signal peptidase I (256 aa).

Catalysis depends on residues Ser32 and Lys75.

Belongs to the peptidase S26 family.

It catalyses the reaction Cleavage of hydrophobic, N-terminal signal or leader sequences from secreted and periplasmic proteins.. The protein is Signal peptidase I (lepB) of Aquifex aeolicus (strain VF5).